Here is a 667-residue protein sequence, read N- to C-terminus: DNA ligase (667 aa).

Residues 34 to 38 (DAEYD), 83 to 84 (SL), and E113 contribute to the NAD(+) site. K115 acts as the N6-AMP-lysine intermediate in catalysis. Residues R136, E170, K286, and K310 each coordinate NAD(+). Zn(2+) is bound by residues C404, C407, C422, and C427. Positions 589 to 667 (ATDSVLSGKT…EQQLEDVVGK (79 aa)) constitute a BRCT domain.

Belongs to the NAD-dependent DNA ligase family. LigA subfamily. Requires Mg(2+) as cofactor. Mn(2+) is required as a cofactor.

The catalysed reaction is NAD(+) + (deoxyribonucleotide)n-3'-hydroxyl + 5'-phospho-(deoxyribonucleotide)m = (deoxyribonucleotide)n+m + AMP + beta-nicotinamide D-nucleotide.. Its function is as follows. DNA ligase that catalyzes the formation of phosphodiester linkages between 5'-phosphoryl and 3'-hydroxyl groups in double-stranded DNA using NAD as a coenzyme and as the energy source for the reaction. It is essential for DNA replication and repair of damaged DNA. This is DNA ligase from Oceanobacillus iheyensis (strain DSM 14371 / CIP 107618 / JCM 11309 / KCTC 3954 / HTE831).